Here is a 279-residue protein sequence, read N- to C-terminus: S-methyl-5'-thioadenosine phosphorylase (279 aa).

Residues Ser13, Arg55–His56, and Thr88–Ala89 each bind phosphate. A substrate-binding site is contributed by Met191. Thr192 is a phosphate binding site. Asp215–Asp217 serves as a coordination point for substrate.

This sequence belongs to the PNP/MTAP phosphorylase family. MTAP subfamily. Homotrimer.

The protein resides in the cytoplasm. The protein localises to the nucleus. It carries out the reaction S-methyl-5'-thioadenosine + phosphate = 5-(methylsulfanyl)-alpha-D-ribose 1-phosphate + adenine. It functions in the pathway amino-acid biosynthesis; L-methionine biosynthesis via salvage pathway; S-methyl-5-thio-alpha-D-ribose 1-phosphate from S-methyl-5'-thioadenosine (phosphorylase route): step 1/1. Its function is as follows. Catalyzes the reversible phosphorylation of S-methyl-5'-thioadenosine (MTA) to adenine and 5-methylthioribose-1-phosphate. Involved in the breakdown of MTA, a major by-product of polyamine biosynthesis. Responsible for the first step in the methionine salvage pathway after MTA has been generated from S-adenosylmethionine. Has broad substrate specificity with 6-aminopurine nucleosides as preferred substrates. In Aedes aegypti (Yellowfever mosquito), this protein is S-methyl-5'-thioadenosine phosphorylase.